The primary structure comprises 554 residues: Glucose-6-phosphate isomerase (554 aa).

The active-site Proton donor is the E359. Catalysis depends on residues H390 and K518.

The protein belongs to the GPI family.

Its subcellular location is the cytoplasm. It catalyses the reaction alpha-D-glucose 6-phosphate = beta-D-fructose 6-phosphate. Its pathway is carbohydrate biosynthesis; gluconeogenesis. The protein operates within carbohydrate degradation; glycolysis; D-glyceraldehyde 3-phosphate and glycerone phosphate from D-glucose: step 2/4. Its function is as follows. Catalyzes the reversible isomerization of glucose-6-phosphate to fructose-6-phosphate. The polypeptide is Glucose-6-phosphate isomerase (Pseudomonas putida (strain GB-1)).